The primary structure comprises 555 residues: MSEAEARPSNFIRQIIDEDLASGKHTSVHTRFPPEPNGYLHIGHAKSICLNFGIAEDYQGQCNLRFDDTNPVKEDVEFVESIKRDVEWLGFTWSGDVRYSSDYFDQLYQYAVELINKGLAYVDELTPEQMREYRGTLTAPGKNSPYRDRSVEENLALFEKMRAGGFAEGTACLRAKIDMASPFIVMRDPVLYRIKFAEHHQSGNKWCIYPMYDFTHCISDALEGITHSLCTLEFQDNRRLYDWVLDNISIDCHPRQYEFSRLNLEYTIMSKRKLNQLVTEKVVEGWDDPRMPTISGLRRRGYTAASIREFCRRIGVTKQDNNVEMMSLESCIRDDLNEHAPRAMAVLDPIKVVIENRAAGEEWLTMPNHPNNPEMGSRQVPFDSEIYIDRADFREEANKQYKRLVLGKEVRLRNAYVIKAERVEKDAEGNVTTLYCSYDAETLNKDPADGRKVKGVIHWVSVAHALPAEIRLYDRLFNVPNPAAAEDFLSTINPESLVIRQGFVEPSLADAVSDKTYQFEREGYFCADSRYSRPGALVFNRTVGLRDTWAAKATQ.

Positions 34–44 (PEPNGYLHIGH) match the 'HIGH' region motif. ATP-binding positions include 35–37 (EPN) and 41–47 (HIGHAKS). 2 residues coordinate L-glutamine: D67 and Y212. Residues T231, 261–262 (RL), and 269–271 (MSK) contribute to the ATP site. The 'KMSKS' region motif lies at 268–272 (IMSKR).

This sequence belongs to the class-I aminoacyl-tRNA synthetase family. As to quaternary structure, monomer.

It localises to the cytoplasm. The enzyme catalyses tRNA(Gln) + L-glutamine + ATP = L-glutaminyl-tRNA(Gln) + AMP + diphosphate. In Yersinia pseudotuberculosis serotype O:1b (strain IP 31758), this protein is Glutamine--tRNA ligase.